A 255-amino-acid chain; its full sequence is Taurine import ATP-binding protein TauB (255 aa).

The region spanning 2–229 (LQISHLYADY…RFVAGESSRS (228 aa)) is the ABC transporter domain. 34 to 41 (GPSGCGKT) is an ATP binding site.

Belongs to the ABC transporter superfamily. Taurine importer (TC 3.A.1.17.1) family. As to quaternary structure, the complex is composed of two ATP-binding proteins (TauB), two transmembrane proteins (TauC) and a solute-binding protein (TauA).

Its subcellular location is the cell inner membrane. It carries out the reaction taurine(out) + ATP + H2O = taurine(in) + ADP + phosphate + H(+). Its function is as follows. Part of the ABC transporter complex TauABC involved in taurine import. Responsible for energy coupling to the transport system. The protein is Taurine import ATP-binding protein TauB of Escherichia coli O6:K15:H31 (strain 536 / UPEC).